The following is a 333-amino-acid chain: Torsin-1A (333 aa).

The signal sequence occupies residues 1–20 (MKLGRATLALLLLVPCVVRA). Positions 92 to 252 (KPKKPLTLSL…VSVFNNKNSG (161 aa)) are interaction with SNAPIN. 2 N-linked (GlcNAc...) asparagine glycosylation sites follow: asparagine 144 and asparagine 159. Residues 252–333 (GFWHSSLIDR…FTKLDYYLDD (82 aa)) are interaction with KLC1. Positions 313-333 (KVFSDKGCKTVFTKLDYYLDD) are interaction with SYNE3.

This sequence belongs to the ClpA/ClpB family. Torsin subfamily. Homohexamer. Interacts with TOR1B; the interaction may be specific of neural tissues. Interacts (ATP-bound) with TOR1AIP1 and TOR1AIP2; the interactions induce ATPase activity. Interacts with KLHL14; preferentially when ATP-free. Interacts with KLC1 (via TPR repeats); the interaction associates TOR1A with the kinesin oligomeric complex. Interacts with COPS4; the interaction associates TOR1A with the CSN complex. Interacts with SNAPIN; the interaction is direct and associates SNAPIN with the CSN complex. Interacts with STON2. Interacts (ATP-bound) with SYNE3 (via KASH domain); the interaction is required for SYNE3 nuclear envelope localization. Interacts with VIM; the interaction associates TOR1A with the cytoskeleton. Interacts with PLEC. Interacts (ATP-bound) with SLC6A3; regulates SLC6A3 transport to the plasma membrane. In terms of processing, N-glycosylated. In terms of tissue distribution, expressed in brain (at protein level).

The protein localises to the endoplasmic reticulum lumen. It localises to the nucleus inner membrane. Its subcellular location is the cell projection. It is found in the growth cone. The protein resides in the cytoplasmic vesicle membrane. The protein localises to the cytoplasmic vesicle. It localises to the secretory vesicle. Its subcellular location is the synaptic vesicle. It carries out the reaction ATP + H2O = ADP + phosphate + H(+). In terms of biological role, protein with chaperone functions important for the control of protein folding, processing, stability and localization as well as for the reduction of misfolded protein aggregates. Involved in the regulation of synaptic vesicle recycling, controls STON2 protein stability in collaboration with the COP9 signalosome complex (CSN). In the nucleus, may link the cytoskeleton with the nuclear envelope, this mechanism seems to be crucial for the control of nuclear polarity, cell movement and, specifically in neurons, nuclear envelope integrity. Participates in the cellular trafficking and may regulate the subcellular location of multipass membrane proteins such as the dopamine transporter SLC6A3, leading to the modulation of dopamine neurotransmission. In the endoplasmic reticulum, plays a role in the quality control of protein folding by increasing clearance of misfolded proteins such as SGCE variants or holding them in an intermediate state for proper refolding. May have a redundant function with TOR1B in non-neural tissues. The sequence is that of Torsin-1A (Tor1a) from Rattus norvegicus (Rat).